The chain runs to 375 residues: Carbamoyl phosphate synthase small chain (375 aa).

The segment at Met-1–Glu-185 is CPSase. Positions 47, 237, and 239 each coordinate L-glutamine. Residues Lys-189–Ser-375 enclose the Glutamine amidotransferase type-1 domain. Catalysis depends on Cys-265, which acts as the Nucleophile. Positions 266, 269, 307, 309, and 310 each coordinate L-glutamine. Active-site residues include His-349 and Glu-351.

Belongs to the CarA family. As to quaternary structure, composed of two chains; the small (or glutamine) chain promotes the hydrolysis of glutamine to ammonia, which is used by the large (or ammonia) chain to synthesize carbamoyl phosphate. Tetramer of heterodimers (alpha,beta)4.

The enzyme catalyses hydrogencarbonate + L-glutamine + 2 ATP + H2O = carbamoyl phosphate + L-glutamate + 2 ADP + phosphate + 2 H(+). It catalyses the reaction L-glutamine + H2O = L-glutamate + NH4(+). It functions in the pathway amino-acid biosynthesis; L-arginine biosynthesis; carbamoyl phosphate from bicarbonate: step 1/1. The protein operates within pyrimidine metabolism; UMP biosynthesis via de novo pathway; (S)-dihydroorotate from bicarbonate: step 1/3. Functionally, small subunit of the glutamine-dependent carbamoyl phosphate synthetase (CPSase). CPSase catalyzes the formation of carbamoyl phosphate from the ammonia moiety of glutamine, carbonate, and phosphate donated by ATP, constituting the first step of 2 biosynthetic pathways, one leading to arginine and/or urea and the other to pyrimidine nucleotides. The small subunit (glutamine amidotransferase) binds and cleaves glutamine to supply the large subunit with the substrate ammonia. In Xanthomonas campestris pv. campestris (strain ATCC 33913 / DSM 3586 / NCPPB 528 / LMG 568 / P 25), this protein is Carbamoyl phosphate synthase small chain.